Here is a 300-residue protein sequence, read N- to C-terminus: Iron-dependent extradiol dioxygenase (300 aa).

2 VOC domains span residues 5-120 (SLAY…AFHG) and 142-270 (GLGH…FGCE). Residue H145 coordinates Fe cation. Residues H200, H215, D250, and Y256 each contribute to the substrate site. H215 contributes to the Fe cation binding site. E266 contacts Fe cation.

The protein belongs to the extradiol ring-cleavage dioxygenase family. Homodimer. The cofactor is Fe(2+).

The enzyme catalyses 3,4-dihydroxy-9,10-secoandrosta-1,3,5(10)-triene-9,17-dione + O2 = (1E,2Z)-3-hydroxy-5,9,17-trioxo-4,5:9,10-disecoandrosta-1(10),2-dien-4-oate + H(+). It functions in the pathway steroid metabolism; cholesterol metabolism. Its function is as follows. Catalyzes the meta-cleavage of 3,4-dihydroxy-9,10-seconandrost-1,3,5(10)-triene-9,17-dione (3,4-DHSA) to produce 4,5-9,10-diseco-3-hydroxy-5,9,17-trioxoandrosta-1(10),2-diene-4-oic acid (4,9-DSHA). Also involved in biphenyl and polychlorinated biphenyls (PCBs) degradation. The protein is Iron-dependent extradiol dioxygenase (hsaC) of Rhodococcus jostii (strain RHA1).